Here is a 237-residue protein sequence, read N- to C-terminus: MSAPKLSLCVEDTGYEIAFAGRSNAGKSSAINSLTNQKQLARASKKPGRTQMINFFSLGNPDQRLVDLPGYGYAAVPEDMKRIWQKELENYLIHRQSLQGLVLLMDIRHPLQHFDTMMLEWAHSRKLFVHILLTKADKLNRGPANQVLLDVKQTLKKMKLSFSIQLFSSLNKQGLEELASVMAGRLNYTLDKTLDFDLDAIPEATEDDLNDELMDQDETSEFNTENIDDHLDQEPKI.

In terms of domain architecture, EngB-type G spans 13–188 (TGYEIAFAGR…ASVMAGRLNY (176 aa)). GTP-binding positions include 21 to 28 (GRSNAGKS), 48 to 52 (GRTQM), 67 to 70 (DLPG), 134 to 137 (TKAD), and 167 to 169 (FSS). Residues Ser28 and Thr50 each contribute to the Mg(2+) site. Acidic residues predominate over residues 207 to 220 (DDLNDELMDQDETS). Positions 207–237 (DDLNDELMDQDETSEFNTENIDDHLDQEPKI) are disordered. Over residues 227–237 (IDDHLDQEPKI) the composition is skewed to basic and acidic residues.

This sequence belongs to the TRAFAC class TrmE-Era-EngA-EngB-Septin-like GTPase superfamily. EngB GTPase family. Mg(2+) serves as cofactor.

In terms of biological role, necessary for normal cell division and for the maintenance of normal septation. This is Probable GTP-binding protein EngB from Acinetobacter baylyi (strain ATCC 33305 / BD413 / ADP1).